The sequence spans 123 residues: Small ribosomal subunit protein uS12 (123 aa).

The segment at 1–21 (MPTIEQLVRKGRQAKPKKSKT) is disordered. Residues 9–20 (RKGRQAKPKKSK) show a composition bias toward basic residues. The residue at position 89 (Asp-89) is a 3-methylthioaspartic acid.

The protein belongs to the universal ribosomal protein uS12 family. In terms of assembly, part of the 30S ribosomal subunit. Contacts proteins S8 and S17. May interact with IF1 in the 30S initiation complex.

With S4 and S5 plays an important role in translational accuracy. In terms of biological role, interacts with and stabilizes bases of the 16S rRNA that are involved in tRNA selection in the A site and with the mRNA backbone. Located at the interface of the 30S and 50S subunits, it traverses the body of the 30S subunit contacting proteins on the other side and probably holding the rRNA structure together. The combined cluster of proteins S8, S12 and S17 appears to hold together the shoulder and platform of the 30S subunit. This Bifidobacterium longum subsp. infantis (strain ATCC 15697 / DSM 20088 / JCM 1222 / NCTC 11817 / S12) protein is Small ribosomal subunit protein uS12.